The following is a 333-amino-acid chain: D-glutamate N-acetyltransferase (333 aa).

The protein belongs to the N-acetyltransferase DgcN family.

It catalyses the reaction D-glutamate + acetyl-CoA = N-acetyl-D-glutamate + CoA + H(+). It functions in the pathway amino-acid degradation. In terms of biological role, N-acetyltransferase involved in a deamination-independent D-glutamate degradation pathway, named the DgcN-DgcA pathway. Catalyzes the transfer of the acetyl moiety from acetyl-CoA to D-glutamate to generate N-acetyl-D-glutamate. This Tritonibacter scottomollicae (Epibacterium scottomollicae) protein is D-glutamate N-acetyltransferase.